Here is a 172-residue protein sequence, read N- to C-terminus: Small ribosomal subunit protein uS5 (172 aa).

The region spanning 17 to 80 (LREKMIAVNR…DEARRKMVKV (64 aa)) is the S5 DRBM domain.

It belongs to the universal ribosomal protein uS5 family. As to quaternary structure, part of the 30S ribosomal subunit. Contacts proteins S4 and S8.

Functionally, with S4 and S12 plays an important role in translational accuracy. Its function is as follows. Located at the back of the 30S subunit body where it stabilizes the conformation of the head with respect to the body. This chain is Small ribosomal subunit protein uS5, found in Ralstonia nicotianae (strain ATCC BAA-1114 / GMI1000) (Ralstonia solanacearum).